The chain runs to 457 residues: Proline-specific permease ProY (457 aa).

Topologically, residues 1 to 17 (MESKNKLKRGLSTRHIR) are cytoplasmic. 2 helical membrane passes run 18–38 (FMAL…DAIK) and 39–59 (MAGP…YIIM). At 60-84 (RALGEMSVHNPAASSFSRYAQENLG) the chain is on the cytoplasmic side. Residues 85-105 (PLAGYITGWTYCFEILIVAIA) form a helical membrane-spanning segment. Residues 106 to 113 (DVTAFGIY) lie on the Periplasmic side of the membrane. Residues 114–134 (MGVWFPTVPHWIWVLSVVLII) form a helical membrane-spanning segment. Over 135-156 (CAVNLMSVKVFGELEFWFSFFK) the chain is Cytoplasmic. The chain crosses the membrane as a helical span at residues 157 to 177 (VATIIIMIVAGFGIIIWGIGN). The Periplasmic portion of the chain corresponds to 178 to 197 (GGQPTGIHNLWSNGGFFSNG). A helical membrane pass occupies residues 198–218 (WLGMVMSLQMVMFAYGGIEII). The Cytoplasmic portion of the chain corresponds to 219 to 242 (GITAGEAKDPEKSIPRAINSVPMR). A helical transmembrane segment spans residues 243-263 (ILVFYVGTLFVIMSIYPWNQV). At 264–277 (GTAGSPFVLTFQHM) the chain is on the periplasmic side. A helical membrane pass occupies residues 278–298 (GITFAASILNFVVLTASLSAI). Residues 299 to 331 (NSDVFGVGRMLHGMAEQGSAPKIFSKTSRRGIP) are Cytoplasmic-facing. The chain crosses the membrane as a helical span at residues 332–352 (WVTVLVMTTALLFAVYLNYIM). Residues 353-355 (PEN) lie on the Periplasmic side of the membrane. The chain crosses the membrane as a helical span at residues 356–376 (VFLVIASLATFATVWVWIMIL). Over 377-399 (LSQIAFRRRLPPEEVKALKFKVP) the chain is Cytoplasmic. Residues 400-420 (GGVATTIGGLIFLLFIIGLIG) form a helical membrane-spanning segment. Residues 421-424 (YHPD) lie on the Periplasmic side of the membrane. The helical transmembrane segment at 425-445 (TRISLYVGFAWIVVLLIGWMF) threads the bilayer. The Cytoplasmic portion of the chain corresponds to 446–457 (KRRHDRQLAENQ).

Belongs to the amino acid-polyamine-organocation (APC) superfamily. Amino acid transporter (AAT) (TC 2.A.3.1) family.

It is found in the cell inner membrane. Permease that is involved in the transport across the cytoplasmic membrane of proline. The sequence is that of Proline-specific permease ProY (proY) from Escherichia coli O157:H7.